A 345-amino-acid polypeptide reads, in one-letter code: N-acetyl-gamma-glutamyl-phosphate reductase (345 aa).

The active site involves cysteine 149.

Belongs to the NAGSA dehydrogenase family. Type 1 subfamily.

The protein resides in the cytoplasm. The catalysed reaction is N-acetyl-L-glutamate 5-semialdehyde + phosphate + NADP(+) = N-acetyl-L-glutamyl 5-phosphate + NADPH + H(+). Its pathway is amino-acid biosynthesis; L-arginine biosynthesis; N(2)-acetyl-L-ornithine from L-glutamate: step 3/4. Catalyzes the NADPH-dependent reduction of N-acetyl-5-glutamyl phosphate to yield N-acetyl-L-glutamate 5-semialdehyde. The polypeptide is N-acetyl-gamma-glutamyl-phosphate reductase (Marinobacter nauticus (strain ATCC 700491 / DSM 11845 / VT8) (Marinobacter aquaeolei)).